A 735-amino-acid chain; its full sequence is Catalase-peroxidase (735 aa).

The segment at residues 95 to 223 is a cross-link (tryptophyl-tyrosyl-methioninium (Trp-Tyr) (with M-249)); sequence WHSAGTYRTG…LAAVQMGLIY (129 aa). His96 (proton acceptor) is an active-site residue. The segment at residues 223 to 249 is a cross-link (tryptophyl-tyrosyl-methioninium (Tyr-Met) (with W-95)); the sequence is YVNPEGPDGVPDPIKSGIDIRETFARM. Position 264 (His264) interacts with heme b.

This sequence belongs to the peroxidase family. Peroxidase/catalase subfamily. Homodimer or homotetramer. The cofactor is heme b. In terms of processing, formation of the three residue Trp-Tyr-Met cross-link is important for the catalase, but not the peroxidase activity of the enzyme.

It catalyses the reaction H2O2 + AH2 = A + 2 H2O. The catalysed reaction is 2 H2O2 = O2 + 2 H2O. Functionally, bifunctional enzyme with both catalase and broad-spectrum peroxidase activity. The sequence is that of Catalase-peroxidase from Aliarcobacter butzleri (strain RM4018) (Arcobacter butzleri).